We begin with the raw amino-acid sequence, 134 residues long: Retinol-binding protein 2 (134 aa).

All-trans-retinol-binding residues include K41 and Q109.

It belongs to the calycin superfamily. Fatty-acid binding protein (FABP) family.

The protein resides in the cytoplasm. Its function is as follows. Intracellular transport of retinol. This chain is Retinol-binding protein 2 (Rbp2), found in Rattus norvegicus (Rat).